The sequence spans 353 residues: Stomatin-like protein 2, mitochondrial (353 aa).

The N-terminal 28 residues, 1–28 (MLARAARGTGALLLRGSVQASGRIPRRA), are a transit peptide targeting the mitochondrion. Phosphoserine; by PKC/PRKCZ is present on serine 17. Tyrosine 124 is subject to Phosphotyrosine. N6-acetyllysine; alternate is present on lysine 145. Residue lysine 145 is modified to N6-succinyllysine; alternate. A coiled-coil region spans residues 215 to 252 (INVAEGKKQAQILASEAEKAEQINQAAGEASAVLAKAK). Residue lysine 233 is modified to N6-acetyllysine. The disordered stretch occupies residues 324-353 (VPGAQNSSEARRDVQTTDTSIEELGRVKLS). Serine 330 carries the post-translational modification Phosphoserine.

Belongs to the band 7/mec-2 family. In terms of assembly, forms homooligomers. Interacts with MFN2; may form heterooligomers. Interacts with PHB1 and PHB2; recruits them to cardiolipin-enriched mitochondrial membranes and stabilizes them. Interacts with CACNA2D2.

The protein resides in the cell membrane. It localises to the mitochondrion. The protein localises to the mitochondrion inner membrane. Its subcellular location is the mitochondrion intermembrane space. It is found in the membrane raft. The protein resides in the cytoplasm. It localises to the cytoskeleton. Functionally, mitochondrial protein that probably regulates the biogenesis and the activity of mitochondria. Stimulates cardiolipin biosynthesis, binds cardiolipin-enriched membranes where it recruits and stabilizes some proteins including prohibitin and may therefore act in the organization of functional microdomains in mitochondrial membranes. Through regulation of the mitochondrial function may play a role into several biological processes including cell migration, cell proliferation, T-cell activation, calcium homeostasis and cellular response to stress. May play a role in calcium homeostasis through negative regulation of calcium efflux from mitochondria. Required for mitochondrial hyperfusion a pro-survival cellular response to stress which results in increased ATP production by mitochondria. May also regulate the organization of functional domains at the plasma membrane and play a role in T-cell activation through association with the T-cell receptor signaling complex and its regulation. The chain is Stomatin-like protein 2, mitochondrial (Stoml2) from Rattus norvegicus (Rat).